The primary structure comprises 173 residues: Inorganic pyrophosphatase (173 aa).

Positions 28, 42, and 54 each coordinate substrate. Residues D64, D69, and D101 each contribute to the Mg(2+) site. Substrate is bound at residue Y140.

Belongs to the PPase family. In terms of assembly, homohexamer. Requires Mg(2+) as cofactor.

The protein localises to the cytoplasm. The catalysed reaction is diphosphate + H2O = 2 phosphate + H(+). Functionally, catalyzes the hydrolysis of inorganic pyrophosphate (PPi) forming two phosphate ions. In Helicobacter pylori (strain ATCC 700392 / 26695) (Campylobacter pylori), this protein is Inorganic pyrophosphatase.